Reading from the N-terminus, the 446-residue chain is N-succinylarginine dihydrolase (446 aa).

Substrate-binding positions include 19–28, asparagine 110, and 137–138; these read SGLSYGNVAS and HR. Residue glutamate 174 is part of the active site. Arginine 214 provides a ligand contact to substrate. Histidine 250 is a catalytic residue. Residues aspartate 252 and asparagine 363 each contribute to the substrate site. The active-site Nucleophile is cysteine 369.

The protein belongs to the succinylarginine dihydrolase family. Homodimer.

It carries out the reaction N(2)-succinyl-L-arginine + 2 H2O + 2 H(+) = N(2)-succinyl-L-ornithine + 2 NH4(+) + CO2. Its pathway is amino-acid degradation; L-arginine degradation via AST pathway; L-glutamate and succinate from L-arginine: step 2/5. Its function is as follows. Catalyzes the hydrolysis of N(2)-succinylarginine into N(2)-succinylornithine, ammonia and CO(2). The chain is N-succinylarginine dihydrolase from Hahella chejuensis (strain KCTC 2396).